A 251-amino-acid chain; its full sequence is Hydroxyacylglutathione hydrolase (251 aa).

His-53, His-55, Asp-57, His-58, His-110, Asp-127, and His-165 together coordinate Zn(2+).

Belongs to the metallo-beta-lactamase superfamily. Glyoxalase II family. As to quaternary structure, monomer. Zn(2+) serves as cofactor.

The catalysed reaction is an S-(2-hydroxyacyl)glutathione + H2O = a 2-hydroxy carboxylate + glutathione + H(+). It participates in secondary metabolite metabolism; methylglyoxal degradation; (R)-lactate from methylglyoxal: step 2/2. Its function is as follows. Thiolesterase that catalyzes the hydrolysis of S-D-lactoyl-glutathione to form glutathione and D-lactic acid. The chain is Hydroxyacylglutathione hydrolase from Escherichia coli O6:H1 (strain CFT073 / ATCC 700928 / UPEC).